The sequence spans 205 residues: Ras-related protein Rab-18-B (205 aa).

Ser17, Gly20, Lys21, Ser22, Ser23, Asp34, Pro35, Thr40, Gly66, Lys123, Asp125, and Ala152 together coordinate GTP. Residue Ser22 participates in Mg(2+) binding. 2 short sequence motifs (switch) span residues 31-45 (DTFD…GVDF) and 63-80 (DTAG…YYRG). Residue Thr40 coordinates Mg(2+). Cys198 carries the S-palmitoyl cysteine lipid modification. Cysteine methyl ester is present on Cys202. The S-geranylgeranyl cysteine moiety is linked to residue Cys202. Positions 203–205 (SLV) are cleaved as a propeptide — removed in mature form.

The protein belongs to the small GTPase superfamily. Rab family. It depends on Mg(2+) as a cofactor.

Its subcellular location is the endoplasmic reticulum membrane. The protein resides in the golgi apparatus. It is found in the cis-Golgi network membrane. The protein localises to the lipid droplet. It localises to the apical cell membrane. It carries out the reaction GTP + H2O = GDP + phosphate + H(+). Regulated by guanine nucleotide exchange factors (GEFs) which promote the exchange of bound GDP for free GTP. Regulated by GTPase activating proteins (GAPs) which increase the GTP hydrolysis activity at the ER membrane. Inhibited by GDP dissociation inhibitors (GDIs) which prevent Rab-GDP dissociation. The small GTPases Rab are key regulators of intracellular membrane trafficking, from the formation of transport vesicles to their fusion with membranes. Rabs cycle between an inactive GDP-bound form and an active GTP-bound form that is able to recruit to membranes different sets of downstream effectors directly responsible for vesicle formation, movement, tethering and fusion. Required for the localization of ZFYVE1 to lipid droplets and for its function in mediating the formation of endoplasmic reticulum-lipid droplets (ER-LD) contacts. Also required for maintaining endoplasmic reticulum structure. Plays a role in apical endocytosis/recycling. Plays a key role in eye and brain development and neurodegeneration. The polypeptide is Ras-related protein Rab-18-B (rab18b) (Danio rerio (Zebrafish)).